Consider the following 125-residue polypeptide: Lymphocyte antigen 6 complex locus protein G6c (125 aa).

The signal sequence occupies residues 1-18 (MKALMLLTLSVLLCWVSA). In terms of domain architecture, UPAR/Ly6 spans 20–111 (IRCHSCYKVP…PRPTPALGLV (92 aa)). Disulfide bonds link Cys22–Cys47, Cys25–Cys33, and Cys39–Cys65. A glycan (N-linked (GlcNAc...) asparagine) is linked at Asn88. Cys92 and Cys97 are disulfide-bonded. Ser99 carries the GPI-anchor amidated serine lipid modification. The propeptide at 100-125 (AGPRPTPALGLVFLTSLAGLGLWLLH) is removed in mature form.

As to quaternary structure, monomer. Post-translationally, N-glycosylated. In terms of tissue distribution, highly expressed at the leading edges of cells, on filopodia.

The protein resides in the cell membrane. This chain is Lymphocyte antigen 6 complex locus protein G6c (LY6G6C), found in Homo sapiens (Human).